Reading from the N-terminus, the 870-residue chain is Leucine--tRNA ligase (870 aa).

The 'HIGH' region signature appears at 42–52 (PYPSGKLHMGH). Positions 629–633 (KMSKS) match the 'KMSKS' region motif. Lys632 is a binding site for ATP.

The protein belongs to the class-I aminoacyl-tRNA synthetase family.

It localises to the cytoplasm. The catalysed reaction is tRNA(Leu) + L-leucine + ATP = L-leucyl-tRNA(Leu) + AMP + diphosphate. This Dechloromonas aromatica (strain RCB) protein is Leucine--tRNA ligase.